The sequence spans 209 residues: 3-hexulose-6-phosphate synthase (209 aa).

It belongs to the HPS/KGPDC family. HPS subfamily. In terms of assembly, homodimer.

The enzyme catalyses D-ribulose 5-phosphate + formaldehyde = D-arabino-hex-3-ulose 6-phosphate. The protein operates within one-carbon metabolism; formaldehyde assimilation via RuMP pathway; D-fructose 6-phosphate from D-ribulose 5-phosphate and formaldehyde: step 1/2. Its function is as follows. Catalyzes the condensation of ribulose 5-phosphate with formaldehyde to form 3-hexulose 6-phosphate. This Methylomonas aminofaciens protein is 3-hexulose-6-phosphate synthase (rmpA).